The sequence spans 106 residues: Large ribosomal subunit protein uL24 (106 aa).

It belongs to the universal ribosomal protein uL24 family. Part of the 50S ribosomal subunit.

In terms of biological role, one of two assembly initiator proteins, it binds directly to the 5'-end of the 23S rRNA, where it nucleates assembly of the 50S subunit. Its function is as follows. One of the proteins that surrounds the polypeptide exit tunnel on the outside of the subunit. The chain is Large ribosomal subunit protein uL24 from Azobacteroides pseudotrichonymphae genomovar. CFP2.